The chain runs to 157 residues: Protein-export protein SecB (157 aa).

The protein belongs to the SecB family. In terms of assembly, homotetramer, a dimer of dimers. One homotetramer interacts with 1 SecA dimer.

It is found in the cytoplasm. In terms of biological role, one of the proteins required for the normal export of preproteins out of the cell cytoplasm. It is a molecular chaperone that binds to a subset of precursor proteins, maintaining them in a translocation-competent state. It also specifically binds to its receptor SecA. The sequence is that of Protein-export protein SecB from Tolumonas auensis (strain DSM 9187 / NBRC 110442 / TA 4).